We begin with the raw amino-acid sequence, 248 residues long: 3-deoxy-manno-octulosonate cytidylyltransferase 2 (248 aa).

Belongs to the KdsB family.

It is found in the cytoplasm. It catalyses the reaction 3-deoxy-alpha-D-manno-oct-2-ulosonate + CTP = CMP-3-deoxy-beta-D-manno-octulosonate + diphosphate. It participates in nucleotide-sugar biosynthesis; CMP-3-deoxy-D-manno-octulosonate biosynthesis; CMP-3-deoxy-D-manno-octulosonate from 3-deoxy-D-manno-octulosonate and CTP: step 1/1. Its pathway is bacterial outer membrane biogenesis; lipopolysaccharide biosynthesis. Functionally, activates KDO (a required 8-carbon sugar) for incorporation into bacterial lipopolysaccharide in Gram-negative bacteria. The protein is 3-deoxy-manno-octulosonate cytidylyltransferase 2 of Hydrogenovibrio crunogenus (strain DSM 25203 / XCL-2) (Thiomicrospira crunogena).